The following is a 1033-amino-acid chain: Probable LRR receptor-like serine/threonine-protein kinase At1g56140 (1033 aa).

The N-terminal stretch at 1-28 (MLRLWRYLCLLLTVWFLCNFGPVYVVRA) is a signal peptide. Topologically, residues 29–636 (QNRTGATTHP…PSKGKSMTGT (608 aa)) are extracellular. Residues Asn30, Asn60, and Asn94 are each glycosylated (N-linked (GlcNAc...) asparagine). LRR repeat units follow at residues 97–121 (ICRI…LWTL), 122–145 (EYLT…LGNL), 147–169 (RMRW…IGLL), 170–193 (TDLR…IGRC), 195–217 (KLQQ…FANL), 241–264 (WTKL…SFSN), 265–288 (LTSL…FIKD), 289–313 (MKSL…IGEY), 314–337 (SSLR…LFNL), 339–361 (QLTH…KGQS), 363–382 (SNVD…WVSL), 383–406 (PNLN…VLSG), and 422–445 (IYSD…VFER). Asn144 carries an N-linked (GlcNAc...) asparagine glycan. The N-linked (GlcNAc...) asparagine glycan is linked to Asn181. Asn264, Asn280, and Asn301 each carry an N-linked (GlcNAc...) asparagine glycan. Residues Asn347 and Asn351 are each glycosylated (N-linked (GlcNAc...) asparagine). An N-linked (GlcNAc...) asparagine glycan is attached at Asn393. The N-linked (GlcNAc...) asparagine glycan is linked to Asn579. A helical transmembrane segment spans residues 637 to 657 (IVGVIVGVGLLSIISGVVIFI). The Cytoplasmic segment spans residues 658 to 1033 (IRKRRKRYTD…MLGAQMNEGR (376 aa)). Thr682 carries the post-translational modification Phosphothreonine. The 259-residue stretch at 693–951 (FDPSNKLGEG…LCTQTSHALR (259 aa)) folds into the Protein kinase domain. ATP-binding positions include 699–707 (LGEGGFGPV) and Lys721. A Phosphotyrosine modification is found at Tyr766. Residue Asp817 is the Proton acceptor of the active site. Phosphoserine is present on residues Ser821 and Ser850. Thr851 and Thr856 each carry phosphothreonine. At Tyr864 the chain carries Phosphotyrosine. The segment at 1012-1033 (SEISPRNNDARPMLGAQMNEGR) is disordered.

The protein belongs to the protein kinase superfamily. Ser/Thr protein kinase family.

The protein resides in the membrane. The catalysed reaction is L-seryl-[protein] + ATP = O-phospho-L-seryl-[protein] + ADP + H(+). It catalyses the reaction L-threonyl-[protein] + ATP = O-phospho-L-threonyl-[protein] + ADP + H(+). The protein is Probable LRR receptor-like serine/threonine-protein kinase At1g56140 of Arabidopsis thaliana (Mouse-ear cress).